Consider the following 425-residue polypeptide: CinA-like protein (425 aa).

The protein belongs to the CinA family.

This chain is CinA-like protein, found in Shewanella sp. (strain MR-4).